A 196-amino-acid chain; its full sequence is Putative 3-methyladenine DNA glycosylase (196 aa).

The protein belongs to the DNA glycosylase MPG family.

This Chlorobium phaeobacteroides (strain DSM 266 / SMG 266 / 2430) protein is Putative 3-methyladenine DNA glycosylase.